The chain runs to 191 residues: Apoptosis regulator BHRF1 (191 aa).

The segment at 1–18 (MAYSTREILLALCIRDSR) is interaction with host VRK2. N-linked (GlcNAc...) asparagine; by host glycosylation is present at Asn-22. Residues 89-109 (EIFHRGDPSLGRALAWMAWCM) carry the BH1 motif. The tract at residues 89-142 (EIFHRGDPSLGRALAWMAWCMHACRTLCCNQSTPYYVVDLSVRGMLEASEGLDG) is interaction with host VRK2. N-linked (GlcNAc...) asparagine; by host glycosylation occurs at Asn-118. Positions 142 to 157 (GWIHQQGGWSTLIEDN) match the BH2 motif. A helical transmembrane segment spans residues 166 to 186 (WTLFLAGLTLSLLVICSYLFI).

Belongs to the Bcl-2 family. Interacts with isoform 1 of host VRK2; this interaction is involved in protecting cells from apoptosis. Interacts with host PRA1; this interaction seems to modulate BHRF1 anti-apoptotic activity. Interacts with host BCL2L11. Interacts with host BAD and BBC3. Interacts with BALF1; BALF1 acting as a negative regulator of the survival function of BHRF1. Interacts with host BECN1.

It is found in the host membrane. It localises to the host mitochondrion. Prevents premature death of the host cell during virus production, which would otherwise reduce the amount of progeny virus. Acts as a host B-cell leukemia/lymphoma 2 (Bcl-2) homolog, and interacts with pro-apoptotic proteins to prevent mitochondria permeabilization, release of cytochrome c and subsequent apoptosis of the host cell. In addition, plays a role in the inhibiton of host BECN1-mediated starvation-induced autophagy without affecting basal levels of autophagy. The chain is Apoptosis regulator BHRF1 from Homo sapiens (Human).